The chain runs to 127 residues: Photosystem II reaction center Psb28 protein (127 aa).

Positions 108 to 127 (LGYSQSQDSDQTEGADNQQA) are disordered. A compositionally biased stretch (polar residues) spans 109–127 (GYSQSQDSDQTEGADNQQA).

It belongs to the Psb28 family. Part of the photosystem II complex.

The protein resides in the cellular thylakoid membrane. The sequence is that of Photosystem II reaction center Psb28 protein from Synechococcus sp. (strain CC9605).